Consider the following 410-residue polypeptide: MALVNEHFLKLPGSYLFSDIAKKVNTFKITHPKRDIIRLGIGDVTRPLPKACIEAMHKAVEEMTSAETFRGYGPEQGYDFLIEAIIKNDYAPRGIHLSPTEVFVNDGAKSDTGNIGDILRHDNSVGVTDPIYPVYIDSNVMCGRAGVLDTESGKWSNVTYMPCTAENHFIPAIPEKRIDIVYLCYPNNPTGTTLTKAELKKWVDYALANDTLILFDAAYEAYIREPDIPHSIYEIKGAKKCAIEFRSFSKTAGFTGVRCGYTVVPKELTAATLEGERIPLNRLWNRRQCTKFNGTSYITQRAAEAIYTPEGKEQIQETINYYMTNARIMKEGLESTGLKVYGGVNAPYLWVKTPNGTSSWRFFDQMLYEANVVGTPGVGFGPSGEGYIRLTAFGERDDCIEAMRRIKNRL.

Substrate is bound by residues Tyr15 and Gly42. Residues Tyr72, Ala108–Lys109, Tyr132, Asn188, Tyr219, and Ser247–Ser249 contribute to the pyridoxal 5'-phosphate site. Residues Lys109, Tyr132, and Asn188 each coordinate substrate. An N6-(pyridoxal phosphate)lysine modification is found at Lys250. Pyridoxal 5'-phosphate contacts are provided by Arg258 and Asn293. Substrate contacts are provided by Asn293 and Arg389.

It belongs to the class-I pyridoxal-phosphate-dependent aminotransferase family. LL-diaminopimelate aminotransferase subfamily. As to quaternary structure, homodimer. Pyridoxal 5'-phosphate is required as a cofactor.

It carries out the reaction (2S,6S)-2,6-diaminopimelate + 2-oxoglutarate = (S)-2,3,4,5-tetrahydrodipicolinate + L-glutamate + H2O + H(+). Its pathway is amino-acid biosynthesis; L-lysine biosynthesis via DAP pathway; LL-2,6-diaminopimelate from (S)-tetrahydrodipicolinate (aminotransferase route): step 1/1. In terms of biological role, involved in the synthesis of meso-diaminopimelate (m-DAP or DL-DAP), required for both lysine and peptidoglycan biosynthesis. Catalyzes the direct conversion of tetrahydrodipicolinate to LL-diaminopimelate. This Bacteroides fragilis (strain YCH46) protein is LL-diaminopimelate aminotransferase.